We begin with the raw amino-acid sequence, 268 residues long: MMQRCLRLQKPLALRRGLHLAQVNSQAVTTEAPEAEPLDAFERQYLKERIEISPFQRLFLGAGSSIAALLNPRRHDMIACLGETTGEDALWTILDTMQASEEGQRIMADKPRIHTSTIDFKYLETLPPDTFGAAYVKFLKDNQVTPDSRMAVRFLEDPKLAYLMTRYRECHDLIHTVLDMPTNMLGEVAVKWVEALNTGLPMCYGGAVFGAVRLRPKQRRAYLKHYLPWALENGKRAKPLMPVYWEKRWEQNIHELRSELGITVLNKA.

4 residues coordinate Zn(2+): His171, Asp172, His175, and Glu187.

This sequence belongs to the COQ4 family. In terms of assembly, component of a multi-subunit COQ enzyme complex. It depends on Zn(2+) as a cofactor.

Its subcellular location is the mitochondrion inner membrane. The catalysed reaction is a 4-hydroxy-3-methoxy-5-(all-trans-polyprenyl)benzoate + H(+) = a 2-methoxy-6-(all-trans-polyprenyl)phenol + CO2. Its pathway is cofactor biosynthesis; ubiquinone biosynthesis. Its function is as follows. Lyase that catalyzes the C1-decarboxylation of 4-hydroxy-3-methoxy-5-(all-trans-polyprenyl)benzoic acid into 2-methoxy-6-(all-trans-polyprenyl)phenol during ubiquinone biosynthesis. The protein is Ubiquinone biosynthesis protein COQ4 homolog, mitochondrial of Drosophila sechellia (Fruit fly).